The chain runs to 634 residues: Chaperone protein DnaK 2 (634 aa).

Phosphothreonine; by autocatalysis is present on Thr197. Over residues 600-620 (ASAEASANAQAGPSSSSSSSS) the composition is skewed to low complexity. The disordered stretch occupies residues 600-634 (ASAEASANAQAGPSSSSSSSSGDDDVIDAEFSESK). The span at 621–634 (GDDDVIDAEFSESK) shows a compositional bias: acidic residues.

The protein belongs to the heat shock protein 70 family.

Its function is as follows. Acts as a chaperone. The protein is Chaperone protein DnaK 2 of Synechococcus sp. (strain ATCC 27144 / PCC 6301 / SAUG 1402/1) (Anacystis nidulans).